A 201-amino-acid polypeptide reads, in one-letter code: uncharacterized protein (201 aa).

Residues 15-122 enclose the Bro-N domain; the sequence is KNQIQFSTFN…EVLPQIRKTG (108 aa).

This is an uncharacterized protein from Haemophilus influenzae (strain ATCC 51907 / DSM 11121 / KW20 / Rd).